The primary structure comprises 228 residues: 2,3-bisphosphoglycerate-dependent phosphoglycerate mutase (228 aa).

Substrate is bound by residues 7–14, 20–21, Arg-59, 86–89, Lys-97, 113–114, and 182–183; these read RHGESAWN, TG, ERHY, RR, and GN. His-8 functions as the Tele-phosphohistidine intermediate in the catalytic mechanism. The Proton donor/acceptor role is filled by Glu-86.

It belongs to the phosphoglycerate mutase family. BPG-dependent PGAM subfamily.

The catalysed reaction is (2R)-2-phosphoglycerate = (2R)-3-phosphoglycerate. Its pathway is carbohydrate degradation; glycolysis; pyruvate from D-glyceraldehyde 3-phosphate: step 3/5. Its function is as follows. Catalyzes the interconversion of 2-phosphoglycerate and 3-phosphoglycerate. The protein is 2,3-bisphosphoglycerate-dependent phosphoglycerate mutase of Fusobacterium nucleatum subsp. nucleatum (strain ATCC 25586 / DSM 15643 / BCRC 10681 / CIP 101130 / JCM 8532 / KCTC 2640 / LMG 13131 / VPI 4355).